The chain runs to 486 residues: ATP synthase subunit beta 2 (486 aa).

An ATP-binding site is contributed by 166 to 173; that stretch reads GGAGVGKT.

The protein belongs to the ATPase alpha/beta chains family. As to quaternary structure, F-type ATPases have 2 components, CF(1) - the catalytic core - and CF(0) - the membrane proton channel. CF(1) has five subunits: alpha(3), beta(3), gamma(1), delta(1), epsilon(1). CF(0) has three main subunits: a(1), b(2) and c(9-12). The alpha and beta chains form an alternating ring which encloses part of the gamma chain. CF(1) is attached to CF(0) by a central stalk formed by the gamma and epsilon chains, while a peripheral stalk is formed by the delta and b chains.

It is found in the cell inner membrane. The catalysed reaction is ATP + H2O + 4 H(+)(in) = ADP + phosphate + 5 H(+)(out). Produces ATP from ADP in the presence of a proton gradient across the membrane. The catalytic sites are hosted primarily by the beta subunits. This is ATP synthase subunit beta 2 from Gluconobacter oxydans (strain 621H) (Gluconobacter suboxydans).